The sequence spans 101 residues: Small ribosomal subunit protein uS14 (101 aa).

It belongs to the universal ribosomal protein uS14 family. Part of the 30S ribosomal subunit. Contacts proteins S3 and S10.

In terms of biological role, binds 16S rRNA, required for the assembly of 30S particles and may also be responsible for determining the conformation of the 16S rRNA at the A site. The protein is Small ribosomal subunit protein uS14 of Methylococcus capsulatus (strain ATCC 33009 / NCIMB 11132 / Bath).